The primary structure comprises 429 residues: Adenylosuccinate synthetase (429 aa).

GTP is bound by residues 12 to 18 (GDEGKGK) and 40 to 42 (GHT). Residue D13 is the Proton acceptor of the active site. Mg(2+) is bound by residues D13 and G40. IMP is bound by residues 13-16 (DEGK), 38-41 (NAGH), T128, R142, Q223, T238, and R302. The Proton donor role is filled by H41. Residue 298-304 (VNTGRKR) participates in substrate binding. Residues R304, 330–332 (KLD), and 412–414 (GVG) contribute to the GTP site.

It belongs to the adenylosuccinate synthetase family. As to quaternary structure, homodimer. The cofactor is Mg(2+).

The protein resides in the cytoplasm. The catalysed reaction is IMP + L-aspartate + GTP = N(6)-(1,2-dicarboxyethyl)-AMP + GDP + phosphate + 2 H(+). Its pathway is purine metabolism; AMP biosynthesis via de novo pathway; AMP from IMP: step 1/2. Functionally, plays an important role in the de novo pathway of purine nucleotide biosynthesis. Catalyzes the first committed step in the biosynthesis of AMP from IMP. In Corynebacterium jeikeium (strain K411), this protein is Adenylosuccinate synthetase.